The following is a 460-amino-acid chain: Wadjet protein JetA (460 aa).

Its function is as follows. Component of antiplasmid transformation system Wadjet type I, composed of JetA, JetB, JetC and JetD. Expression of Wadjet type I in B.subtilis (strain BEST7003) reduces the transformation efficiency of plasmid pHCMC05. This Bacillus cereus (strain Q1) protein is Wadjet protein JetA.